Consider the following 881-residue polypeptide: Phosphoenolpyruvate carboxylase (881 aa).

Residues His142 and Lys547 contribute to the active site.

It belongs to the PEPCase type 1 family. Mg(2+) serves as cofactor.

It catalyses the reaction oxaloacetate + phosphate = phosphoenolpyruvate + hydrogencarbonate. In terms of biological role, forms oxaloacetate, a four-carbon dicarboxylic acid source for the tricarboxylic acid cycle. The polypeptide is Phosphoenolpyruvate carboxylase (Hahella chejuensis (strain KCTC 2396)).